The chain runs to 184 residues: MSIEWYAVHTLVGQEEKAKANLEKRIKAFGLQDKIFQVLIPTEEVVELREGGKKEVVRKKLFPGYLFIQMDLGDEEEPNEAWEVVRGTPGITGFVGAGMRPVPLSPDEVRHILEVSGLLGKKEAPKAQVAFREGDQVRVVSGPFADFTGTVTEINPERGKVKVMVTIFGRETPVELDFSQVVKA.

One can recognise a KOW domain in the interval 133-163; the sequence is EGDQVRVVSGPFADFTGTVTEINPERGKVKV.

Belongs to the NusG family.

Functionally, participates in transcription elongation, termination and antitermination. In Thermus thermophilus (strain ATCC 27634 / DSM 579 / HB8), this protein is Transcription termination/antitermination protein NusG.